A 196-amino-acid chain; its full sequence is ATP-dependent Clp protease proteolytic subunit (196 aa).

The active-site Nucleophile is Ser98. His123 is an active-site residue.

The protein belongs to the peptidase S14 family. As to quaternary structure, fourteen ClpP subunits assemble into 2 heptameric rings which stack back to back to give a disk-like structure with a central cavity, resembling the structure of eukaryotic proteasomes.

Its subcellular location is the cytoplasm. It catalyses the reaction Hydrolysis of proteins to small peptides in the presence of ATP and magnesium. alpha-casein is the usual test substrate. In the absence of ATP, only oligopeptides shorter than five residues are hydrolyzed (such as succinyl-Leu-Tyr-|-NHMec, and Leu-Tyr-Leu-|-Tyr-Trp, in which cleavage of the -Tyr-|-Leu- and -Tyr-|-Trp bonds also occurs).. Functionally, cleaves peptides in various proteins in a process that requires ATP hydrolysis. Has a chymotrypsin-like activity. Plays a major role in the degradation of misfolded proteins. The protein is ATP-dependent Clp protease proteolytic subunit of Sulfurimonas denitrificans (strain ATCC 33889 / DSM 1251) (Thiomicrospira denitrificans (strain ATCC 33889 / DSM 1251)).